The chain runs to 654 residues: MSDFQHAQLDWDENGQPLSRAFGDVYFSRHSGLNETRHVFLATNRLAERFAALGDGEVLCIGETGFGTGLNFLCAWQLFERVAPAGARLEFVSVEKFPLAAADLRRALALWPELAPWSEALLGQYLAVHPGFQRLAFAGGRVGLTLLLGDALECLPQLDARVDAWFLDGFAPAKNPDMWSPVLFAELARLSAPQATLGTFTSAGFVRRGLVEAGFAMQRVPGYGQKREMLSGTYQGPPANAGKPWYARPAPHAGRRAALVVGGGLAGCASAASLAARGWQVTLIERHPGLAREASGNPQGVLYLKLSAHGTPLSRLVLSGFGHTRRLLERLRRGHDWDACGVLQLAFDAKEAQRQAQLAAAFPADLLHGLEREQAERLAGVALPAGGLFYPEAGWVHPPALCQALAATPGITLLSGRAVRLRREGDDWCAYAGDECLARAPLAILATAADIRDFPPAAELPLKRIRGQVTRLPATPQSRALRTVVCAEGYVAPPRGDEHTLGASFDFKSEDLAPTLAEHQGNLELLREISPDLLQRLGADDLPLERLEGRAAFRCTSPDYLPLVGPLAERAAFDEAYAVLARDARQVPERACPWLPGLYLNSGHGSRGLISAPLSGELLAAWICGEPLPLPRAVAEACHPNRFLLRDLVRGQRG.

Positions 1–235 (MSDFQHAQLD…KREMLSGTYQ (235 aa)) are tRNA (mnm(5)s(2)U34)-methyltransferase. Residues 261–654 (VGGGLAGCAS…LRDLVRGQRG (394 aa)) are FAD-dependent cmnm(5)s(2)U34 oxidoreductase.

It in the N-terminal section; belongs to the methyltransferase superfamily. tRNA (mnm(5)s(2)U34)-methyltransferase family. This sequence in the C-terminal section; belongs to the DAO family. Requires FAD as cofactor.

Its subcellular location is the cytoplasm. The catalysed reaction is 5-aminomethyl-2-thiouridine(34) in tRNA + S-adenosyl-L-methionine = 5-methylaminomethyl-2-thiouridine(34) in tRNA + S-adenosyl-L-homocysteine + H(+). Functionally, catalyzes the last two steps in the biosynthesis of 5-methylaminomethyl-2-thiouridine (mnm(5)s(2)U) at the wobble position (U34) in tRNA. Catalyzes the FAD-dependent demodification of cmnm(5)s(2)U34 to nm(5)s(2)U34, followed by the transfer of a methyl group from S-adenosyl-L-methionine to nm(5)s(2)U34, to form mnm(5)s(2)U34. This is tRNA 5-methylaminomethyl-2-thiouridine biosynthesis bifunctional protein MnmC from Pseudomonas aeruginosa (strain ATCC 15692 / DSM 22644 / CIP 104116 / JCM 14847 / LMG 12228 / 1C / PRS 101 / PAO1).